The chain runs to 1320 residues: FERM and PDZ domain-containing protein 4 (1320 aa).

The WW domain maps to 33-66 (QVPPYGWEMMTNRDGRDYFINHMTQAIPFDDPRF). In terms of domain architecture, PDZ spans 78–155 (KVEMRRDPVL…SILLTVIQPY (78 aa)). The FERM domain maps to 204–519 (NVLKVYLENG…GYYRLLVDSR (316 aa)). Disordered stretches follow at residues 809–847 (APPP…EIPV), 897–927 (YSPE…QKQS), 949–981 (TEFP…PPKV), 1024–1050 (KRKS…QQGT), 1114–1139 (PRGP…ADDA), and 1204–1274 (GHFS…ATFE). Low complexity predominate over residues 900 to 913 (ESSSDSGNETNSSE). Positions 1204-1217 (GHFSLQSSQGSSVD) are enriched in polar residues. Positions 1223-1232 (GSSSSACATP) are enriched in low complexity.

As to quaternary structure, interacts (via C-terminus) with DLG1, DLG2, DLG3 and DLG4/PSD95. Interacts (via N-terminus) with ARHGEF7; the interaction is mediated by the PDZ domain. Interacts with GPSM2 (via TPR repeat region). As to expression, expressed in various regions of the brain, including cortex, hippocampus, cerebellum, olfactory bulb and medial habenular nucleus.

The protein resides in the cell projection. The protein localises to the dendritic spine. Its function is as follows. Positive regulator of dendritic spine morphogenesis and density. Required for the maintenance of excitatory synaptic transmission. Binds phosphatidylinositol 4,5-bisphosphate. The sequence is that of FERM and PDZ domain-containing protein 4 (Frmpd4) from Mus musculus (Mouse).